The following is a 501-amino-acid chain: E3 ubiquitin-protein ligase TRIM35 (501 aa).

Methionine 1 bears the N-acetylmethionine mark. The residue at position 8 (serine 8) is a Phosphoserine. The segment at 21–61 (CAVCYDPFRDAVTLRCGHNFCRRCVSGCWEVQTTPSCPVCK) adopts an RING-type zinc-finger fold. A B box-type zinc finger spans residues 96–137 (RSPRPCRAHRAPLTLFCVEDKELLCCACQADARHQEHRVQPI). Zn(2+) is bound by residues cysteine 101, histidine 104, cysteine 123, and histidine 129. Residues 209–252 (MKEESRKKHLLAEEKMKQLAEQTEALAREIERLQMEMKEDDMTF) are a coiled coil. The 212-residue stretch at 284–495 (LESLQYRVWK…LRICHLRVSI (212 aa)) folds into the B30.2/SPRY domain.

As to quaternary structure, interacts with PKM isoform M2, but not isoform M1; this interaction may compete with that between PKM and FGFR1, and hence reduces FGFR1-dependent tyrosine phosphorylation of PKM. Interacts with IRF7; this interaction promotes IRF7 proteasomal degradation. Interacts with TRAF3; this interaction promotes TRAF3 activation.

Its subcellular location is the cytoplasm. It is found in the nucleus. It carries out the reaction S-ubiquitinyl-[E2 ubiquitin-conjugating enzyme]-L-cysteine + [acceptor protein]-L-lysine = [E2 ubiquitin-conjugating enzyme]-L-cysteine + N(6)-ubiquitinyl-[acceptor protein]-L-lysine.. Its pathway is protein modification; protein ubiquitination. Functionally, E3 ubiquitin-protein ligase that participates in multiple biological processes including cell death, glucose metabolism, and in particular, the innate immune response. Mediates 'Lys-63'-linked polyubiquitination of TRAF3 thereby promoting type I interferon production via RIG-I signaling pathway. Can also catalyze 'Lys-48'-linked polyubiquitination and proteasomal degradation of viral proteins such as influenza virus PB2. Acts as a negative feedback regulator of TLR7- and TLR9-triggered signaling. Mechanistically, promotes the 'Lys-48'-linked ubiquitination of IRF7 and induces its degradation via a proteasome-dependent pathway. Reduces FGFR1-dependent tyrosine phosphorylation of PKM, inhibiting PKM-dependent lactate production, glucose metabolism, and cell growth. This is E3 ubiquitin-protein ligase TRIM35 (Trim35) from Rattus norvegicus (Rat).